The primary structure comprises 257 residues: Pyridoxine 5'-phosphate synthase (257 aa).

Asn6 contacts 3-amino-2-oxopropyl phosphate. A 1-deoxy-D-xylulose 5-phosphate-binding site is contributed by 8–9 (DH). Residue Arg17 participates in 3-amino-2-oxopropyl phosphate binding. The active-site Proton acceptor is the His42. Residues Arg44 and His49 each contribute to the 1-deoxy-D-xylulose 5-phosphate site. Glu69 serves as the catalytic Proton acceptor. Thr99 lines the 1-deoxy-D-xylulose 5-phosphate pocket. The active-site Proton donor is the His211. 3-amino-2-oxopropyl phosphate-binding positions include Gly212 and 233-234 (GQ).

Belongs to the PNP synthase family. As to quaternary structure, homooctamer; tetramer of dimers.

The protein resides in the cytoplasm. The enzyme catalyses 3-amino-2-oxopropyl phosphate + 1-deoxy-D-xylulose 5-phosphate = pyridoxine 5'-phosphate + phosphate + 2 H2O + H(+). It functions in the pathway cofactor biosynthesis; pyridoxine 5'-phosphate biosynthesis; pyridoxine 5'-phosphate from D-erythrose 4-phosphate: step 5/5. Its function is as follows. Catalyzes the complicated ring closure reaction between the two acyclic compounds 1-deoxy-D-xylulose-5-phosphate (DXP) and 3-amino-2-oxopropyl phosphate (1-amino-acetone-3-phosphate or AAP) to form pyridoxine 5'-phosphate (PNP) and inorganic phosphate. The sequence is that of Pyridoxine 5'-phosphate synthase from Campylobacter fetus subsp. fetus (strain 82-40).